The primary structure comprises 248 residues: 2,3-bisphosphoglycerate-dependent phosphoglycerate mutase (248 aa).

Residues 8–15 (RHGESTWN), 21–22 (TG), R60, 87–90 (ERHY), K98, 114–115 (RR), and 183–184 (GN) each bind substrate. H9 functions as the Tele-phosphohistidine intermediate in the catalytic mechanism. The Proton donor/acceptor role is filled by E87.

The protein belongs to the phosphoglycerate mutase family. BPG-dependent PGAM subfamily. In terms of assembly, homodimer.

It carries out the reaction (2R)-2-phosphoglycerate = (2R)-3-phosphoglycerate. It functions in the pathway carbohydrate degradation; glycolysis; pyruvate from D-glyceraldehyde 3-phosphate: step 3/5. Its function is as follows. Catalyzes the interconversion of 2-phosphoglycerate and 3-phosphoglycerate. This is 2,3-bisphosphoglycerate-dependent phosphoglycerate mutase from Burkholderia cenocepacia (strain ATCC BAA-245 / DSM 16553 / LMG 16656 / NCTC 13227 / J2315 / CF5610) (Burkholderia cepacia (strain J2315)).